The following is a 591-amino-acid chain: V-type ATP synthase alpha chain (591 aa).

233-240 (GPFGAGKT) serves as a coordination point for ATP.

The protein belongs to the ATPase alpha/beta chains family.

It catalyses the reaction ATP + H2O + 4 H(+)(in) = ADP + phosphate + 5 H(+)(out). In terms of biological role, produces ATP from ADP in the presence of a proton gradient across the membrane. The V-type alpha chain is a catalytic subunit. The chain is V-type ATP synthase alpha chain from Streptococcus pyogenes serotype M1.